Reading from the N-terminus, the 795-residue chain is Protein translocase subunit SecA 2 (795 aa).

ATP is bound by residues Gln84, 102-106 (GEGKT), and Asp496.

Belongs to the SecA family. Monomer and homodimer. Part of the essential Sec protein translocation apparatus which comprises SecA, SecYEG and auxiliary proteins SecDF. Other proteins may also be involved.

It is found in the cell membrane. Its subcellular location is the cytoplasm. The enzyme catalyses ATP + H2O + cellular proteinSide 1 = ADP + phosphate + cellular proteinSide 2.. Part of the Sec protein translocase complex. Interacts with the SecYEG preprotein conducting channel. Has a central role in coupling the hydrolysis of ATP to the transfer of proteins into and across the cell membrane, serving as an ATP-driven molecular motor driving the stepwise translocation of polypeptide chains across the membrane. The protein is Protein translocase subunit SecA 2 of Streptococcus agalactiae serotype III (strain NEM316).